The chain runs to 146 residues: MQLNTLKPAEGSKKNRRRVGRGIGSGLGKTAGRGHKGQKSRSGGFHKVGFEGGQMPMYRRLPKRGFVSMTRRHVGQITLNDLAKINLPEVDLLVLKAHGFAGEQINAVKVIKTGELKIAVTLKGLTATAGAKAAIEAAGGKLVELA.

A disordered region spans residues 1 to 51 (MQLNTLKPAEGSKKNRRRVGRGIGSGLGKTAGRGHKGQKSRSGGFHKVGFE). Residues 21–31 (RGIGSGLGKTA) show a composition bias toward gly residues.

Belongs to the universal ribosomal protein uL15 family. Part of the 50S ribosomal subunit.

Functionally, binds to the 23S rRNA. The protein is Large ribosomal subunit protein uL15 of Polynucleobacter asymbioticus (strain DSM 18221 / CIP 109841 / QLW-P1DMWA-1) (Polynucleobacter necessarius subsp. asymbioticus).